The primary structure comprises 1781 residues: Atrochrysone carboxylic acid synthase (1781 aa).

The N-terminal acylcarrier protein transacylase domain (SAT) stretch occupies residues 15-253 (TRDLFRRLHV…KHVALPVYAG (239 aa)). The Ketosynthase family 3 (KS3) domain maps to 390–823 (QSKIAIVGMA…GGNTSVVVEE (434 aa)). Catalysis depends on for beta-ketoacyl synthase activity residues Cys563, His698, and His741. A malonyl-CoA:ACP transacylase (MAT) domain region spans residues 925 to 1244 (FAFTGQGASH…SLGLLHCAGL (320 aa)). The tract at residues 1312-1631 (TSTVQQIIEE…RVLLNRFFSA (320 aa)) is product template (PT) domain. The N-terminal hotdog fold stretch occupies residues 1316-1451 (QQIIEETFSD…ADIVYGLPTD (136 aa)). One can recognise a PKS/mFAS DH domain in the interval 1316-1626 (QQIIEETFSD…FRRYPRVLLN (311 aa)). Residue His1348 is the Proton acceptor; for dehydratase activity of the active site. Residues 1478-1626 (IANRLSHNMA…FRRYPRVLLN (149 aa)) form a C-terminal hotdog fold region. The active-site Proton donor; for dehydratase activity is Asp1537. The interval 1633 to 1653 (DSDTSKHTSATDVSPPKKVVQ) is disordered. Positions 1703-1780 (VDSDSTASKA…DLKAWLMEYY (78 aa)) constitute a Carrier domain. O-(pantetheine 4'-phosphoryl)serine is present on Ser1740.

It catalyses the reaction holo-[ACP] + 8 malonyl-CoA + 8 H(+) = atrochrysone carboxyl-[ACP] + 8 CO2 + 8 CoA + 2 H2O. Its pathway is secondary metabolite biosynthesis. Functionally, atrochrysone carboxylic acid synthase; part of the gene cluster that mediates the biosynthesis of the dimeric xanthones cryptosporioptides. The pathway begins with the synthesis of atrochrysone thioester by the polyketide synthase dmx-nrPKS. The atrochrysone carboxyl ACP thioesterase dmxR1 then breaks the thioester bond and releases the atrochrysone carboxylic acid from dmx-nrPKS. Atrochrysone carboxylic acid is decarboxylated by the decarboxylase dmxR15, and oxidized by the anthrone oxygenase dmxR16 to yield emodin. Emodin is then reduced to emodin hydroquinone by the oxidoreductase dmxR7. A-ring reduction by the short chain dehydrogenase dmxR18, dehydration by the scytalone dehydratase-like protein dmxR17 and probable spontaneous re-oxidation, results in overall deoxygenation to chrysophanol. Baeyer-Villiger oxidation by the Baeyer-Villiger monooxygenase (BVMO) dmxR6 then yields monodictylactone in equilibrium with monodictyphenone. In the case of the cryptosporioptides biosynthesis, monodictylactone is reduced at C-12 to an alcohol (by the short chain dehydrogenases dmxR12 or dmxR8) and hydroxylated at C-5 by dmxR9, yielding the electron-rich aromatic which could eliminate H(2)O to form the ortho-quinonemethide, followed by tautomerisation to paraquinone and complete the formal reduction to produce the 10-methylgroup. Conjugate addition of C-4a-OH to the resulting paraquinone by the monooxygenase dmxR10 then gives cyclohexadienone, which is then reduced at C-5 by the short chain dehydrogenase dmxR3 to give the dihydroxanthone. The 6,7-epoxide in the cryptosporioptides could be introduced by the cytochrome P450 monooxygenase dmxL3. The highly reducing PKS dmxL2 manufactures butyrate, which is further carboxylated by dmxL1 to form ethylmalonate. It is not yet clear whether the carboxylation occurs while the butyrate is attached to the ACP of dmxL2, but this unusual fungal metabolite could then be esterified to O-5 by the O-acetyltransferase dmxR13. Finally, dimerization performed by dmxR5 gives the observed dimers cryptosporioptides A, B and C as the final products of the pathway. The sequence is that of Atrochrysone carboxylic acid synthase from Cryptosporiopsis sp. (strain 8999).